The chain runs to 136 residues: MTERTLVLIKPDGVQRLLVGEIISRIERKGLAIAALELRNVTEELASQHYAEHEGKPFFGSLLEFITSAPVVAAIVEGPRAIAAFRQLAGGTDPVEKATPGTIRGDFGLETQFNLVHGSDSAESAQREIALWFPSA.

ATP-binding residues include lysine 10, phenylalanine 58, arginine 86, threonine 92, arginine 104, and asparagine 114. Histidine 117 serves as the catalytic Pros-phosphohistidine intermediate.

The protein belongs to the NDK family. In terms of assembly, homotetramer. Mg(2+) is required as a cofactor.

It is found in the cytoplasm. The catalysed reaction is a 2'-deoxyribonucleoside 5'-diphosphate + ATP = a 2'-deoxyribonucleoside 5'-triphosphate + ADP. It catalyses the reaction a ribonucleoside 5'-diphosphate + ATP = a ribonucleoside 5'-triphosphate + ADP. Major role in the synthesis of nucleoside triphosphates other than ATP. The ATP gamma phosphate is transferred to the NDP beta phosphate via a ping-pong mechanism, using a phosphorylated active-site intermediate. In Mycobacterium ulcerans (strain Agy99), this protein is Nucleoside diphosphate kinase.